A 311-amino-acid chain; its full sequence is Methionyl-tRNA formyltransferase (311 aa).

(6S)-5,6,7,8-tetrahydrofolate is bound at residue 110 to 113; sequence SLLP.

It belongs to the Fmt family.

The catalysed reaction is L-methionyl-tRNA(fMet) + (6R)-10-formyltetrahydrofolate = N-formyl-L-methionyl-tRNA(fMet) + (6S)-5,6,7,8-tetrahydrofolate + H(+). Attaches a formyl group to the free amino group of methionyl-tRNA(fMet). The formyl group appears to play a dual role in the initiator identity of N-formylmethionyl-tRNA by promoting its recognition by IF2 and preventing the misappropriation of this tRNA by the elongation apparatus. The protein is Methionyl-tRNA formyltransferase of Streptococcus pyogenes serotype M28 (strain MGAS6180).